The following is a 228-amino-acid chain: Prolactin-2A1 (228 aa).

Positions 1-28 (MQLSVTHPCCRTLILLLVSNLLLWESEA) are cleaved as a signal peptide. 2 cysteine pairs are disulfide-bonded: Cys-87–Cys-203 and Cys-220–Cys-228.

Belongs to the somatotropin/prolactin family. As to expression, expressed specifically in the placenta. Expression restricted to the junctional zone of the chorioallantoic placenta.

The protein localises to the secreted. The protein is Prolactin-2A1 (Prl2a1) of Mus musculus (Mouse).